The following is a 209-amino-acid chain: Thiamine-phosphate synthase (209 aa).

4-amino-2-methyl-5-(diphosphooxymethyl)pyrimidine contacts are provided by residues 36 to 40 and Asn68; that span reads QYRDK. Residues Asp69 and Asp87 each coordinate Mg(2+). Thr106 is a binding site for 4-amino-2-methyl-5-(diphosphooxymethyl)pyrimidine. 133 to 135 serves as a coordination point for 2-[(2R,5Z)-2-carboxy-4-methylthiazol-5(2H)-ylidene]ethyl phosphate; the sequence is SST. Residue Lys136 participates in 4-amino-2-methyl-5-(diphosphooxymethyl)pyrimidine binding. Gly163 provides a ligand contact to 2-[(2R,5Z)-2-carboxy-4-methylthiazol-5(2H)-ylidene]ethyl phosphate.

This sequence belongs to the thiamine-phosphate synthase family. It depends on Mg(2+) as a cofactor.

The catalysed reaction is 2-[(2R,5Z)-2-carboxy-4-methylthiazol-5(2H)-ylidene]ethyl phosphate + 4-amino-2-methyl-5-(diphosphooxymethyl)pyrimidine + 2 H(+) = thiamine phosphate + CO2 + diphosphate. It carries out the reaction 2-(2-carboxy-4-methylthiazol-5-yl)ethyl phosphate + 4-amino-2-methyl-5-(diphosphooxymethyl)pyrimidine + 2 H(+) = thiamine phosphate + CO2 + diphosphate. It catalyses the reaction 4-methyl-5-(2-phosphooxyethyl)-thiazole + 4-amino-2-methyl-5-(diphosphooxymethyl)pyrimidine + H(+) = thiamine phosphate + diphosphate. It functions in the pathway cofactor biosynthesis; thiamine diphosphate biosynthesis; thiamine phosphate from 4-amino-2-methyl-5-diphosphomethylpyrimidine and 4-methyl-5-(2-phosphoethyl)-thiazole: step 1/1. Its function is as follows. Condenses 4-methyl-5-(beta-hydroxyethyl)thiazole monophosphate (THZ-P) and 2-methyl-4-amino-5-hydroxymethyl pyrimidine pyrophosphate (HMP-PP) to form thiamine monophosphate (TMP). In Pseudomonas paraeruginosa (strain DSM 24068 / PA7) (Pseudomonas aeruginosa (strain PA7)), this protein is Thiamine-phosphate synthase.